The sequence spans 593 residues: Genetic interactor of prohibitins 3, mitochondrial (593 aa).

Residues 1 to 61 constitute a mitochondrion transit peptide; that stretch reads MLGRIRPFVR…NPSKPGFYRP (61 aa). A CP-type G domain is found at 142 to 349; that stretch reads VESIDKIMST…IVDVPGFSAN (208 aa).

The protein belongs to the TRAFAC class YlqF/YawG GTPase family. GEP3 subfamily.

The protein localises to the mitochondrion. In terms of biological role, may be involved in the mitochondrial lipid metabolism. The sequence is that of Genetic interactor of prohibitins 3, mitochondrial (GEP3) from Debaryomyces hansenii (strain ATCC 36239 / CBS 767 / BCRC 21394 / JCM 1990 / NBRC 0083 / IGC 2968) (Yeast).